We begin with the raw amino-acid sequence, 360 residues long: Secreted LysM effector LysM2 (360 aa).

The N-terminal stretch at 1-21 (MKISSLSILPLLGVVSAGIHG) is a signal peptide. Residues 37–85 (TWYLDLVDDSYTCENIESQWDLSHEAFVAWNPGVKKDCSGLKVGLSVCV) form the LysM 1 domain. Over residues 94–113 (ATPTSEASTSSETSSASPTA) the composition is skewed to low complexity. Positions 94-125 (ATPTSEASTSSETSSASPTASRPPLPSPTQDG) are disordered. A glycan (N-linked (GlcNAc...) asparagine) is linked at Asn129. In terms of domain architecture, LysM 2 spans 132–179 (KFHQAVSGDTCSKIISRYKPITLDQFIEWNPALEKDCSGLWSGYYYCV). Asn204 is a glycosylation site (N-linked (GlcNAc...) asparagine). 2 LysM domains span residues 225–272 (RWHK…YYCI) and 311–357 (KWHQ…YVCV).

It belongs to the secreted LysM effector family.

The protein localises to the secreted. It is found in the cell wall. In terms of biological role, secreted effector that binds two substrates, chitin and N-linked oligosaccharides associated with human skin glycoproteins. Could provide the pathogen with three important functions including shielding host cell wall chitin from the human immune system, shielding the pathogen's glycoproteins from host degradation and immune surveillance, and helping facilitate pathogen adhesion to human skin. The sequence is that of Secreted LysM effector LysM2 from Trichophyton rubrum (strain ATCC MYA-4607 / CBS 118892) (Athlete's foot fungus).